A 349-amino-acid chain; its full sequence is Terpene cyclase rstn5 (349 aa).

Transmembrane regions (helical) follow at residues Leu4 to Phe24, Phe81 to Ala101, Gly116 to Val136, Val158 to Phe178, and Gly181 to Leu201. N-linked (GlcNAc...) asparagine glycosylation occurs at Asn222. A run of 3 helical transmembrane segments spans residues Val228–Gly248, Leu271–Ala291, and Thr309–Leu329.

It belongs to the membrane-bound ascI terpene cyclase family.

It localises to the membrane. It participates in antifungal biosynthesis. Functionally, cyclase; part of the gene cluster that mediates the biosynthesis of the tetrahydropyranyl antifungal agent restricticin that acts as an inhibitor of CYP51 and blocks the ergosterol biosynthesis. The highly reducing polyketide synthase rstn3, the short chain dehydrogenase rstn4, the cyclase rstn5, the FAD-dependent monooxygenase rstn6 and the enoylreductase rstn7 are required to generate the first stable intermediate desmethylrestrictinol. Rstn3 with rstn7 biosynthesize the first polyketide chain intermediate that is reduced by rstn4, followed by epoxidation by rstn6 before 6-endo cyclization via epoxide opening by rstn5 leads to desmethylrestrictinol. The methyltransferase rstn1 then catalyzes the C4 O-methylation of desmethylrestrictinol to produce restrictinol, and the nonribosomal peptide synthetase rstn8 catalyzes the C3 esterification of restrictinol with glycine that leads to restricticin. The chain is Terpene cyclase rstn5 from Aspergillus nomiae NRRL (strain ATCC 15546 / NRRL 13137 / CBS 260.88 / M93).